Reading from the N-terminus, the 176-residue chain is Urease accessory protein UreE (176 aa).

Belongs to the UreE family.

Its subcellular location is the cytoplasm. Its function is as follows. Involved in urease metallocenter assembly. Binds nickel. Probably functions as a nickel donor during metallocenter assembly. The chain is Urease accessory protein UreE from Helicobacter bizzozeronii.